The chain runs to 379 residues: Histidinol-phosphate aminotransferase (379 aa).

Lys236 carries the N6-(pyridoxal phosphate)lysine modification.

This sequence belongs to the class-II pyridoxal-phosphate-dependent aminotransferase family. Histidinol-phosphate aminotransferase subfamily. As to quaternary structure, homodimer. It depends on pyridoxal 5'-phosphate as a cofactor.

It carries out the reaction L-histidinol phosphate + 2-oxoglutarate = 3-(imidazol-4-yl)-2-oxopropyl phosphate + L-glutamate. The protein operates within amino-acid biosynthesis; L-histidine biosynthesis; L-histidine from 5-phospho-alpha-D-ribose 1-diphosphate: step 7/9. The protein is Histidinol-phosphate aminotransferase of Desulfotalea psychrophila (strain LSv54 / DSM 12343).